The sequence spans 495 residues: Glycerol kinase (495 aa).

T13 is an ADP binding site. ATP-binding residues include T13, T14, and S15. T13 provides a ligand contact to sn-glycerol 3-phosphate. An ADP-binding site is contributed by R17. Sn-glycerol 3-phosphate-binding residues include R83, E84, Y135, and D244. The glycerol site is built by R83, E84, Y135, D244, and Q245. ADP-binding residues include T266 and G309. ATP is bound by residues T266, G309, Q313, and G410. ADP is bound by residues G410 and N414.

Belongs to the FGGY kinase family.

It carries out the reaction glycerol + ATP = sn-glycerol 3-phosphate + ADP + H(+). The protein operates within polyol metabolism; glycerol degradation via glycerol kinase pathway; sn-glycerol 3-phosphate from glycerol: step 1/1. Inhibited by fructose 1,6-bisphosphate (FBP). Functionally, key enzyme in the regulation of glycerol uptake and metabolism. Catalyzes the phosphorylation of glycerol to yield sn-glycerol 3-phosphate. This Shewanella sediminis (strain HAW-EB3) protein is Glycerol kinase.